The chain runs to 547 residues: CAP-Gly domain-containing linker protein 3 (547 aa).

The segment at 1–49 (MTKTDPAPMAPPPRGEEEEEEEEDEPVPEAPSPTQERRQKPVVHPSAPA) is disordered. Over residues 16 to 27 (EEEEEEEEDEPV) the composition is skewed to acidic residues. 3 ANK repeats span residues 117 to 158 (TDMT…LRSR), 160 to 191 (TNMN…VVNS), and 197 to 229 (NHGS…LRNR). The CAP-Gly 1 domain occupies 314–356 (GTTEFASGQWVGVELDEPEGKNDGSVGGVRYFICPPKQGLFAS). Positions 365–413 (DAPPSSVTSTPRTPRMDFSRVTGKGRREHKGKKKTPSSPSLGSLQQRDG) are disordered. Low complexity predominate over residues 367–377 (PPSSVTSTPRT). Thr-374 carries the post-translational modification Phosphothreonine. Residues 387–399 (GKGRREHKGKKKT) are compositionally biased toward basic residues. Over residues 400-410 (PSSPSLGSLQQ) the composition is skewed to polar residues. The residue at position 401 (Ser-401) is a Phosphoserine. The CAP-Gly 2 domain maps to 436-478 (GKTDFAPGYWYGIELDQPTGKHDGSVFGVRYFTCPPRHGVFAP). Residues 488–547 (STDSPGDSVGAKKVHQVTMTQPKRTFTTVRTPKDIASENSISRLLFCCWFPWMLRAEMQS) are goLD. 2 S-palmitoyl cysteine lipidation sites follow: Cys-534 and Cys-535.

Homodimer. Interacts with AKT1 and AKT2; when AKT1 and AKT2 are phosphorylated and activated, affinity is higher for AKT2. Interacts with ZDHHC13 (via ANK repeats). Interacts with ZDHHC17 (via ANK repeats). In terms of processing, palmitoylation by ZDHHC17 regulates association with the plasma membrane.

It localises to the cell membrane. The protein localises to the cytoplasm. Its subcellular location is the golgi apparatus. The protein resides in the golgi stack. Functionally, functions as a cytoplasmic linker protein. Involved in TGN-endosome dynamics. May modulate the cellular compartmentalization of AKT kinase family and promote its cell membrane localization, thereby playing a role in glucose transport in adipocytes. This Homo sapiens (Human) protein is CAP-Gly domain-containing linker protein 3 (CLIP3).